The sequence spans 61 residues: Cytotoxin 1 (61 aa).

4 disulfides stabilise this stretch: Cys-3–Cys-22, Cys-15–Cys-39, Cys-43–Cys-54, and Cys-55–Cys-60.

This sequence belongs to the three-finger toxin family. Short-chain subfamily. Type IB cytotoxin sub-subfamily. Expressed by the venom gland.

Its subcellular location is the secreted. This protein lyses red blood cells and has cardiotoxic and hypotensive activities. The protein is Cytotoxin 1 of Hemachatus haemachatus (Rinkhals).